We begin with the raw amino-acid sequence, 453 residues long: Bifunctional protein GlmU (453 aa).

Residues 1 to 225 (MNIVILAAGT…EWETLGVNSK (225 aa)) form a pyrophosphorylase region. Residues 6-9 (LAAG), K20, Q71, 76-77 (GT), 98-100 (YGD), G135, E150, N165, and N223 contribute to the UDP-N-acetyl-alpha-D-glucosamine site. D100 is a binding site for Mg(2+). Residue N223 coordinates Mg(2+). A linker region spans residues 226–246 (AQLAELERIHQRNVADALLVD). The tract at residues 247-453 (GVTLADPARV…GYVRPVKKKS (207 aa)) is N-acetyltransferase. UDP-N-acetyl-alpha-D-glucosamine is bound by residues R329 and K347. The Proton acceptor role is filled by H359. UDP-N-acetyl-alpha-D-glucosamine contacts are provided by Y362 and N373. Acetyl-CoA contacts are provided by residues A376, 382-383 (NY), S401, and A419.

In the N-terminal section; belongs to the N-acetylglucosamine-1-phosphate uridyltransferase family. This sequence in the C-terminal section; belongs to the transferase hexapeptide repeat family. In terms of assembly, homotrimer. Mg(2+) serves as cofactor.

It is found in the cytoplasm. It catalyses the reaction alpha-D-glucosamine 1-phosphate + acetyl-CoA = N-acetyl-alpha-D-glucosamine 1-phosphate + CoA + H(+). It carries out the reaction N-acetyl-alpha-D-glucosamine 1-phosphate + UTP + H(+) = UDP-N-acetyl-alpha-D-glucosamine + diphosphate. It participates in nucleotide-sugar biosynthesis; UDP-N-acetyl-alpha-D-glucosamine biosynthesis; N-acetyl-alpha-D-glucosamine 1-phosphate from alpha-D-glucosamine 6-phosphate (route II): step 2/2. It functions in the pathway nucleotide-sugar biosynthesis; UDP-N-acetyl-alpha-D-glucosamine biosynthesis; UDP-N-acetyl-alpha-D-glucosamine from N-acetyl-alpha-D-glucosamine 1-phosphate: step 1/1. The protein operates within bacterial outer membrane biogenesis; LPS lipid A biosynthesis. Functionally, catalyzes the last two sequential reactions in the de novo biosynthetic pathway for UDP-N-acetylglucosamine (UDP-GlcNAc). The C-terminal domain catalyzes the transfer of acetyl group from acetyl coenzyme A to glucosamine-1-phosphate (GlcN-1-P) to produce N-acetylglucosamine-1-phosphate (GlcNAc-1-P), which is converted into UDP-GlcNAc by the transfer of uridine 5-monophosphate (from uridine 5-triphosphate), a reaction catalyzed by the N-terminal domain. In Burkholderia ambifaria (strain ATCC BAA-244 / DSM 16087 / CCUG 44356 / LMG 19182 / AMMD) (Burkholderia cepacia (strain AMMD)), this protein is Bifunctional protein GlmU.